We begin with the raw amino-acid sequence, 246 residues long: 4-hydroxy-tetrahydrodipicolinate reductase (246 aa).

NAD(+)-binding positions include 8 to 13 (GAKGRM), 74 to 76 (GTT), and 101 to 104 (APNF). His-131 functions as the Proton donor/acceptor in the catalytic mechanism. A (S)-2,3,4,5-tetrahydrodipicolinate-binding site is contributed by His-132. The Proton donor role is filled by Lys-135. Residue 141–142 (GT) coordinates (S)-2,3,4,5-tetrahydrodipicolinate.

The protein belongs to the DapB family.

It localises to the cytoplasm. It catalyses the reaction (S)-2,3,4,5-tetrahydrodipicolinate + NAD(+) + H2O = (2S,4S)-4-hydroxy-2,3,4,5-tetrahydrodipicolinate + NADH + H(+). It carries out the reaction (S)-2,3,4,5-tetrahydrodipicolinate + NADP(+) + H2O = (2S,4S)-4-hydroxy-2,3,4,5-tetrahydrodipicolinate + NADPH + H(+). Its pathway is amino-acid biosynthesis; L-lysine biosynthesis via DAP pathway; (S)-tetrahydrodipicolinate from L-aspartate: step 4/4. Its function is as follows. Catalyzes the conversion of 4-hydroxy-tetrahydrodipicolinate (HTPA) to tetrahydrodipicolinate. The sequence is that of 4-hydroxy-tetrahydrodipicolinate reductase from Cutibacterium acnes (strain DSM 16379 / KPA171202) (Propionibacterium acnes).